The sequence spans 60 residues: Large ribosomal subunit protein bL32 (60 aa).

The protein belongs to the bacterial ribosomal protein bL32 family.

The sequence is that of Large ribosomal subunit protein bL32 from Fervidobacterium nodosum (strain ATCC 35602 / DSM 5306 / Rt17-B1).